The sequence spans 856 residues: Protein translocase subunit SecA (856 aa).

Residues Q77, 95–99 (GEGKT), and D534 contribute to the ATP site.

It belongs to the SecA family. As to quaternary structure, monomer and homodimer. Part of the essential Sec protein translocation apparatus which comprises SecA, SecYEG and auxiliary proteins SecDF. Other proteins may also be involved.

It localises to the cell inner membrane. The protein resides in the cytoplasm. It catalyses the reaction ATP + H2O + cellular proteinSide 1 = ADP + phosphate + cellular proteinSide 2.. Functionally, part of the Sec protein translocase complex. Interacts with the SecYEG preprotein conducting channel. Has a central role in coupling the hydrolysis of ATP to the transfer of proteins into and across the cell membrane, serving as an ATP-driven molecular motor driving the stepwise translocation of polypeptide chains across the membrane. The protein is Protein translocase subunit SecA of Thermosipho africanus (strain TCF52B).